We begin with the raw amino-acid sequence, 185 residues long: Bcl-2-like protein 10 (185 aa).

The BH1 motif lies at 76-95 (LSNDQEFNWGRLVMLLAFVG). The BH2 signature appears at 138-149 (WLEAHGGWDGFC). Residues 160 to 182 (FWRRLLIRAILSCFFATAIFYIW) traverse the membrane as a helical segment.

The protein belongs to the Bcl-2 family. Interacts with BAX. Interacts with BCL2, BCL2L1/BCLX. Interacts with APAF1. Interacts with ITPR1, ITPR2 and ITPR3; the interaction with ITPR1 is increased in the presence of AHCLY1. Interacts with AHCYL1. Interacts with HIP1R (via ENTH and I/LWEQ domains). Interacts with CASP9. Interacts with BCL2L11/BIM. Interacts with BIK. Interacts with UBQLN4. Interacts with NME2/NM23-H2. Interacts with and PMAIP1/NOXA. Interacts with TPX2. Interacts with UBQLN1; in the cytoplasm. Interacts (via BH1 domain) with BECN1. It depends on Ca(2+) as a cofactor. Post-translationally, monoubiquitinated by UBQLN1; results in stabilization of BCL2L10 protein abundance and in relocalization from mitochondria to cytoplasm. As to expression, expressed in oligodendroglial lineage cells.

It is found in the mitochondrion. It localises to the nucleus membrane. The protein localises to the endoplasmic reticulum. Its subcellular location is the cytoplasm. The protein resides in the cytoskeleton. It is found in the spindle. Promotes cell survival by suppressing apoptosis induced by BAX but not BAK. Increases binding of AHCYL1/IRBIT to ITPR1. Reduces ITPR1-mediated calcium release from the endoplasmic reticulum cooperatively with AHCYL1/IRBIT under normal cellular conditions. Under apoptotic stress conditions, dissociates from ITPR1 and is displaced from mitochondria-associated endoplasmic reticulum membranes, leading to increased Ca(2+) transfer to mitochondria which promotes apoptosis. Required for the correct formation of the microtubule organizing center during oocyte cell division, potentially via regulation of protein abundance and localization of other microtubule organizing center components such as AURKA and TPX2. This Rattus norvegicus (Rat) protein is Bcl-2-like protein 10.